A 242-amino-acid polypeptide reads, in one-letter code: MKRSKTLRAADAKVDREKLYAPLEAVRLAKETSATKFDSTVEVAFRLGVDPRKADQMVRGTVNLPHGTGKTARVLVFATGDRAAAAEAAGADIVGDDELINEIAKGNRLNEFDAVVATPDLMGKVGRLGRVLGPRGLMPNPKTGTVTMDVAKAVTEIKGGKIEFRVDKHSNLHFIIGKVSFSDEKLVENYAAALDEIIRLKPSAAKGRYIKKAALSTTMGPGIQLDSNRTRNLLVEEDPAAV.

It belongs to the universal ribosomal protein uL1 family. In terms of assembly, part of the 50S ribosomal subunit.

In terms of biological role, binds directly to 23S rRNA. The L1 stalk is quite mobile in the ribosome, and is involved in E site tRNA release. Its function is as follows. Protein L1 is also a translational repressor protein, it controls the translation of the L11 operon by binding to its mRNA. The sequence is that of Large ribosomal subunit protein uL1 from Kitasatospora aureofaciens (Streptomyces aureofaciens).